A 601-amino-acid polypeptide reads, in one-letter code: Elongation factor 4 (601 aa).

Positions 7 to 189 constitute a tr-type G domain; the sequence is SLIRNFSIIA…ALVTRLPPPV (183 aa). GTP is bound by residues 19 to 24 and 136 to 139; these read DHGKST and NKVD.

It belongs to the TRAFAC class translation factor GTPase superfamily. Classic translation factor GTPase family. LepA subfamily.

The protein resides in the cell inner membrane. It catalyses the reaction GTP + H2O = GDP + phosphate + H(+). Required for accurate and efficient protein synthesis under certain stress conditions. May act as a fidelity factor of the translation reaction, by catalyzing a one-codon backward translocation of tRNAs on improperly translocated ribosomes. Back-translocation proceeds from a post-translocation (POST) complex to a pre-translocation (PRE) complex, thus giving elongation factor G a second chance to translocate the tRNAs correctly. Binds to ribosomes in a GTP-dependent manner. In Gluconacetobacter diazotrophicus (strain ATCC 49037 / DSM 5601 / CCUG 37298 / CIP 103539 / LMG 7603 / PAl5), this protein is Elongation factor 4.